We begin with the raw amino-acid sequence, 282 residues long: 2-dehydro-3-deoxyphosphooctonate aldolase (282 aa).

It belongs to the KdsA family.

Its subcellular location is the cytoplasm. It catalyses the reaction D-arabinose 5-phosphate + phosphoenolpyruvate + H2O = 3-deoxy-alpha-D-manno-2-octulosonate-8-phosphate + phosphate. It participates in carbohydrate biosynthesis; 3-deoxy-D-manno-octulosonate biosynthesis; 3-deoxy-D-manno-octulosonate from D-ribulose 5-phosphate: step 2/3. It functions in the pathway bacterial outer membrane biogenesis; lipopolysaccharide biosynthesis. The protein is 2-dehydro-3-deoxyphosphooctonate aldolase of Shewanella amazonensis (strain ATCC BAA-1098 / SB2B).